We begin with the raw amino-acid sequence, 521 residues long: Bifunctional purine biosynthesis protein PurH (521 aa).

In terms of domain architecture, MGS-like spans 1–145 (MIKQALISVS…KNHKDVIVIC (145 aa)).

Belongs to the PurH family.

It catalyses the reaction (6R)-10-formyltetrahydrofolate + 5-amino-1-(5-phospho-beta-D-ribosyl)imidazole-4-carboxamide = 5-formamido-1-(5-phospho-D-ribosyl)imidazole-4-carboxamide + (6S)-5,6,7,8-tetrahydrofolate. It carries out the reaction IMP + H2O = 5-formamido-1-(5-phospho-D-ribosyl)imidazole-4-carboxamide. The protein operates within purine metabolism; IMP biosynthesis via de novo pathway; 5-formamido-1-(5-phospho-D-ribosyl)imidazole-4-carboxamide from 5-amino-1-(5-phospho-D-ribosyl)imidazole-4-carboxamide (10-formyl THF route): step 1/1. Its pathway is purine metabolism; IMP biosynthesis via de novo pathway; IMP from 5-formamido-1-(5-phospho-D-ribosyl)imidazole-4-carboxamide: step 1/1. The polypeptide is Bifunctional purine biosynthesis protein PurH (Herminiimonas arsenicoxydans).